The following is a 200-amino-acid chain: Protein GrpE (200 aa).

Over residues 1 to 27 the composition is skewed to basic and acidic residues; that stretch reads MTKQEKAENQEKPTEETVEETPKKETP. The segment at 1-50 is disordered; the sequence is MTKQEKAENQEKPTEETVEETPKKETPFEPVMEADEVEETTEAQAPVEEA. Positions 32 to 41 are enriched in acidic residues; the sequence is MEADEVEETT.

Belongs to the GrpE family. In terms of assembly, homodimer.

Its subcellular location is the cytoplasm. In terms of biological role, participates actively in the response to hyperosmotic and heat shock by preventing the aggregation of stress-denatured proteins, in association with DnaK and GrpE. It is the nucleotide exchange factor for DnaK and may function as a thermosensor. Unfolded proteins bind initially to DnaJ; upon interaction with the DnaJ-bound protein, DnaK hydrolyzes its bound ATP, resulting in the formation of a stable complex. GrpE releases ADP from DnaK; ATP binding to DnaK triggers the release of the substrate protein, thus completing the reaction cycle. Several rounds of ATP-dependent interactions between DnaJ, DnaK and GrpE are required for fully efficient folding. The sequence is that of Protein GrpE from Latilactobacillus sakei subsp. sakei (strain 23K) (Lactobacillus sakei subsp. sakei).